A 358-amino-acid chain; its full sequence is Forkhead box protein I1c (358 aa).

Over residues 1–13 the composition is skewed to polar residues; the sequence is MNSIHLPSHQRTS. Disordered stretches follow at residues 1-25 and 191-255; these read MNSI…PKGA and DNGN…PSGI. A DNA-binding region (fork-head) is located at residues 106–200; the sequence is RPPYSYSALI…DNGNFRRKRK (95 aa).

It localises to the nucleus. Its function is as follows. Probable transcription factor. This is Forkhead box protein I1c from Xenopus tropicalis (Western clawed frog).